The sequence spans 612 residues: Oligopeptide transport ATP-binding protein OppD (612 aa).

The ABC transporter 1 domain occupies 5 to 255; sequence LEVTDLAVTF…RRMPYTVGLL (251 aa). ATP is bound by residues Ser-43, Gly-44, Ser-45, Gly-46, Lys-47, Ser-48, Ala-49, Tyr-61, Gln-96, Arg-147, Gly-158, Glu-159, and His-213. [4Fe-4S] cluster contacts are provided by Cys-286, Cys-292, Cys-299, and Cys-317. The ABC transporter 2 domain occupies 350–600; the sequence is VRVRHLVKTY…PKHEYTRRLL (251 aa). ATP-binding residues include Ser-396, Gly-397, Ser-398, Gly-399, Lys-400, Ser-401, Thr-402, Gln-445, Arg-495, Glu-499, Gly-503, and His-558.

This sequence belongs to the ABC transporter superfamily. In terms of assembly, the complex is composed of an ATP-binding protein (OppD), two transmembrane proteins (OppB and OppC) and a solute-binding protein (OppA).

It localises to the cell inner membrane. The enzyme catalyses a [peptide](out) + ATP + H2O = a [peptide](in) + ADP + phosphate + H(+). In terms of biological role, part of the ABC transporter complex OppABCD involved in the uptake of oligopeptides. Responsible for energy coupling to the transport system. The sequence is that of Oligopeptide transport ATP-binding protein OppD from Mycobacterium bovis (strain ATCC BAA-935 / AF2122/97).